The primary structure comprises 178 residues: Protein-export protein SecB (178 aa).

Acidic residues predominate over residues 1 to 13 (MADEGDVLTDLDM). Residues 1–25 (MADEGDVLTDLDMDPAAGGNGADNR) form a disordered region.

This sequence belongs to the SecB family. Homotetramer, a dimer of dimers. One homotetramer interacts with 1 SecA dimer.

Its subcellular location is the cytoplasm. In terms of biological role, one of the proteins required for the normal export of preproteins out of the cell cytoplasm. It is a molecular chaperone that binds to a subset of precursor proteins, maintaining them in a translocation-competent state. It also specifically binds to its receptor SecA. This Erythrobacter litoralis (strain HTCC2594) protein is Protein-export protein SecB.